Reading from the N-terminus, the 175-residue chain is NADH-ubiquinone oxidoreductase chain 6 (175 aa).

5 helical membrane-spanning segments follow: residues 1–21, 25–45, 47–67, 88–108, and 149–169; these read MMTY…VGFS, SPIY…GIVL, FGGS…MLVV, AVLG…CYIL, and YGTW…LVIM.

This sequence belongs to the complex I subunit 6 family. In terms of assembly, core subunit of respiratory chain NADH dehydrogenase (Complex I) which is composed of 45 different subunits.

Its subcellular location is the mitochondrion inner membrane. The enzyme catalyses a ubiquinone + NADH + 5 H(+)(in) = a ubiquinol + NAD(+) + 4 H(+)(out). In terms of biological role, core subunit of the mitochondrial membrane respiratory chain NADH dehydrogenase (Complex I) which catalyzes electron transfer from NADH through the respiratory chain, using ubiquinone as an electron acceptor. Essential for the catalytic activity and assembly of complex I. This is NADH-ubiquinone oxidoreductase chain 6 (MT-ND6) from Halichoerus grypus (Gray seal).